We begin with the raw amino-acid sequence, 222 residues long: Endonuclease V (222 aa).

Positions 34 and 102 each coordinate Mg(2+).

Belongs to the endonuclease V family. Mg(2+) serves as cofactor.

Its subcellular location is the cytoplasm. It catalyses the reaction Endonucleolytic cleavage at apurinic or apyrimidinic sites to products with a 5'-phosphate.. Its function is as follows. DNA repair enzyme involved in the repair of deaminated bases. Selectively cleaves double-stranded DNA at the second phosphodiester bond 3' to a deoxyinosine leaving behind the intact lesion on the nicked DNA. The protein is Endonuclease V of Photorhabdus laumondii subsp. laumondii (strain DSM 15139 / CIP 105565 / TT01) (Photorhabdus luminescens subsp. laumondii).